The primary structure comprises 104 residues: NADH-quinone oxidoreductase subunit K (104 aa).

3 helical membrane-spanning segments follow: residues 4–24 (VPLSVYLVLALILFCIGLYGA), 31–51 (VIVLICIELMLNAVNINLVAF), and 64–84 (IFALFTITVAAAEAAVGLAIL).

This sequence belongs to the complex I subunit 4L family. As to quaternary structure, NDH-1 is composed of 14 different subunits. Subunits NuoA, H, J, K, L, M, N constitute the membrane sector of the complex.

The protein localises to the cell membrane. It catalyses the reaction a quinone + NADH + 5 H(+)(in) = a quinol + NAD(+) + 4 H(+)(out). Its function is as follows. NDH-1 shuttles electrons from NADH, via FMN and iron-sulfur (Fe-S) centers, to quinones in the respiratory chain. The immediate electron acceptor for the enzyme in this species is believed to be a menaquinone. Couples the redox reaction to proton translocation (for every two electrons transferred, four hydrogen ions are translocated across the cytoplasmic membrane), and thus conserves the redox energy in a proton gradient. The protein is NADH-quinone oxidoreductase subunit K of Geobacillus sp. (strain WCH70).